The chain runs to 1036 residues: MGFALERFAEAVDPALECKLCGQVLEEPLCTPCGHVFCASCLLPWAVRRRRCPLQCQPLAPGELYRVLPLRSLIQKLRVQCDYRARGCGHSVRLHELEAHVEHCDFGPARRLRSRGGCASGLGGGEVPARGGCGPTPRAGRGGGARGGPPGGRWGRGRGPGPRVLAWRRREKALLAQLWALQGEVQLTARRYQEKFTQYMAHVRNFVGDLGGGHRRDGEHKPFTIVLERENDTLGFNIIGGRPNQNNQEGTSTEGIYVSKILENGPADRADGLEIHDKIMEVNGKDLSKATHEEAVEAFRNAKEPIVVQVLRRTPLSRPAYGMASEVQLMNASTQTDITFEHIMALAKLRPPTPPVPDICPFLLSDSCHSLHPMEHEFYEDNEYISSLPADADRTEDFEYEEVELCRVSSQEKLGLTVCYRTDDEEDTGIYVSEVDPNSIAAKDGRIREGDRILQINGEDVQNREEAVALLSNDECKRIVLLVARPEIQLDEGWLEDERNEFLEELNLEMLEEEHNEAMQPTANEVEQPKKQEEEEGTTDTATSSSNNHEKDSGVGRTDESLRNDESSEQENAAEDPNSTSLKSKRDLGQSQDTLGSVELQYNESLVSGEYIDSDCIGNPDEDCERFRQLLELKCKIRNHGEYDLYYSSSTIECNQGEQEGVEHELQLLNEELRNIELECQNIMQAHRLQKVTDQYGDIWTLHDGGFRNYNTSIDMQRGKLDDIMEHPEKSDKDSSSAYNTAESCRSTPLTVDRSPDSSLPRVINLTNKKNLRSTMAATQSSSGQSSKESTSTKAKTTEQGCSAESKEKVLEGSKLPDQEKAVSEHIPYLSPYHSSSYRYANIPAHARHYQSYMQLIQQKSAVEYAQSQLSLVSMCKESQKCSEPKMEWKVKIRSDGTRYITKRPVRDRILKERALKIKEERSGMTTDDDTMSEMKMGRYWSKEERKQHLVRAKEQRRRREFMMRSRLECLKESPQSGSEGKKEINIIELSHKKMMKKRNKKILDNWMTIQELMTHGAKSPDGTRVHNAFLSVTTV.

The RING-type; degenerate zinc-finger motif lies at cysteine 18–cysteine 56. The segment covering alanine 129–proline 160 has biased composition (gly residues). Positions alanine 129–glycine 161 are disordered. 2 consecutive PDZ domains span residues threonine 224–threonine 314 and glutamate 402–proline 486. The interval histidine 515–glutamine 590 is disordered. Residues asparagine 548 to glutamate 566 are compositionally biased toward basic and acidic residues. Residues asparagine 655–leucine 689 are a coiled coil. Residues glutamate 726–serine 735 are compositionally biased toward basic and acidic residues. Residues glutamate 726–glutamine 819 are disordered. Positions serine 736–leucine 750 are enriched in polar residues. The span at serine 774 to glutamate 799 shows a compositional bias: low complexity. Residues glutamate 805–glutamine 819 show a composition bias toward basic and acidic residues.

This Homo sapiens (Human) protein is PDZ domain-containing RING finger protein 4 (PDZRN4).